Here is a 216-residue protein sequence, read N- to C-terminus: 3-isopropylmalate dehydratase small subunit 2 (216 aa).

Belongs to the LeuD family. LeuD type 1 subfamily. In terms of assembly, heterodimer of LeuC and LeuD.

It carries out the reaction (2R,3S)-3-isopropylmalate = (2S)-2-isopropylmalate. It functions in the pathway amino-acid biosynthesis; L-leucine biosynthesis; L-leucine from 3-methyl-2-oxobutanoate: step 2/4. Its function is as follows. Catalyzes the isomerization between 2-isopropylmalate and 3-isopropylmalate, via the formation of 2-isopropylmaleate. The chain is 3-isopropylmalate dehydratase small subunit 2 from Bordetella pertussis (strain Tohama I / ATCC BAA-589 / NCTC 13251).